The sequence spans 131 residues: Protein FON2 SPARE1 (131 aa).

Residues 1–22 form the signal peptide; it reads MSRRLGAAAAVLLLWLAVLTFA. The segment at 67–131 is disordered; it reads SPSSLTTTDR…VPTGPNPLHH (65 aa). Residues 76 to 97 are compositionally biased toward basic residues; it reads RHHHHHRHHGHHHHRGHDRWNR.

It belongs to the CLV3/ESR signal peptide family. In terms of tissue distribution, expressed in all aerial apical meristems, including the floral and inflorescence meristems in the reproductive phase and the shoot apical meristem in the vegetative phase. Also detected in the primordia of lateral organs such as the leaf and the floral organs.

Its subcellular location is the secreted. Functionally, involved in the maintenance of the floral meristem and of the shoot apical meristem in the vegetative phase. Suppresses the fon2 mutation and acts independently of FON1. In Oryza sativa subsp. japonica, the protein has a single amino acid substitution at the putative processing site of the signal peptide and is inactive. This is Protein FON2 SPARE1 (FOS1) from Oryza sativa subsp. indica (Rice).